The following is a 134-amino-acid chain: Transcription antitermination protein NusB (134 aa).

The protein belongs to the NusB family.

Its function is as follows. Involved in transcription antitermination. Required for transcription of ribosomal RNA (rRNA) genes. Binds specifically to the boxA antiterminator sequence of the ribosomal RNA (rrn) operons. The polypeptide is Transcription antitermination protein NusB (Shewanella frigidimarina (strain NCIMB 400)).